The primary structure comprises 213 residues: Probable thiopurine S-methyltransferase (213 aa).

4 residues coordinate S-adenosyl-L-methionine: tryptophan 10, leucine 45, glutamate 66, and arginine 125.

Belongs to the class I-like SAM-binding methyltransferase superfamily. TPMT family.

The protein localises to the cytoplasm. It carries out the reaction S-adenosyl-L-methionine + a thiopurine = S-adenosyl-L-homocysteine + a thiopurine S-methylether.. This chain is Probable thiopurine S-methyltransferase, found in Yarrowia lipolytica (strain CLIB 122 / E 150) (Yeast).